A 260-amino-acid polypeptide reads, in one-letter code: Type II methyltransferase M.CviBI (260 aa).

The S-adenosyl-L-methionine site is built by W7, K11, D54, and D177.

Belongs to the N(4)/N(6)-methyltransferase family.

It catalyses the reaction a 2'-deoxyadenosine in DNA + S-adenosyl-L-methionine = an N(6)-methyl-2'-deoxyadenosine in DNA + S-adenosyl-L-homocysteine + H(+). In terms of biological role, a alpha subtype methylase, recognizes the double-stranded sequence 5'-GANTC-3', methylates A-2 on both strands, and protects the DNA from cleavage by the CviBI endonuclease. This Paramecium bursaria Chlorella virus NC1A (PBCV-NC1A) protein is Type II methyltransferase M.CviBI.